The primary structure comprises 306 residues: Ribonuclease Z (306 aa).

Zn(2+)-binding residues include His-61, His-63, Asp-65, His-66, His-137, Asp-207, and His-263. Residue Asp-65 is the Proton acceptor of the active site.

This sequence belongs to the RNase Z family. Homodimer. Zn(2+) is required as a cofactor.

It catalyses the reaction Endonucleolytic cleavage of RNA, removing extra 3' nucleotides from tRNA precursor, generating 3' termini of tRNAs. A 3'-hydroxy group is left at the tRNA terminus and a 5'-phosphoryl group is left at the trailer molecule.. Functionally, zinc phosphodiesterase, which displays some tRNA 3'-processing endonuclease activity. Probably involved in tRNA maturation, by removing a 3'-trailer from precursor tRNA. The protein is Ribonuclease Z of Thermococcus sibiricus (strain DSM 12597 / MM 739).